Reading from the N-terminus, the 219-residue chain is Elongation factor Ts (219 aa).

The tract at residues 82 to 85 is involved in Mg(2+) ion dislocation from EF-Tu; it reads TDFV.

It belongs to the EF-Ts family.

It localises to the cytoplasm. Functionally, associates with the EF-Tu.GDP complex and induces the exchange of GDP to GTP. It remains bound to the aminoacyl-tRNA.EF-Tu.GTP complex up to the GTP hydrolysis stage on the ribosome. The chain is Elongation factor Ts from Anaeromyxobacter dehalogenans (strain 2CP-1 / ATCC BAA-258).